Consider the following 235-residue polypeptide: Ubiquinone/menaquinone biosynthesis C-methyltransferase UbiE (235 aa).

S-adenosyl-L-methionine-binding residues include T60, D81, and S126.

Belongs to the class I-like SAM-binding methyltransferase superfamily. MenG/UbiE family.

The enzyme catalyses a 2-demethylmenaquinol + S-adenosyl-L-methionine = a menaquinol + S-adenosyl-L-homocysteine + H(+). It catalyses the reaction a 2-methoxy-6-(all-trans-polyprenyl)benzene-1,4-diol + S-adenosyl-L-methionine = a 5-methoxy-2-methyl-3-(all-trans-polyprenyl)benzene-1,4-diol + S-adenosyl-L-homocysteine + H(+). It participates in quinol/quinone metabolism; menaquinone biosynthesis; menaquinol from 1,4-dihydroxy-2-naphthoate: step 2/2. It functions in the pathway cofactor biosynthesis; ubiquinone biosynthesis. In terms of biological role, methyltransferase required for the conversion of demethylmenaquinol (DMKH2) to menaquinol (MKH2) and the conversion of 2-polyprenyl-6-methoxy-1,4-benzoquinol (DDMQH2) to 2-polyprenyl-3-methyl-6-methoxy-1,4-benzoquinol (DMQH2). The sequence is that of Ubiquinone/menaquinone biosynthesis C-methyltransferase UbiE from Citrifermentans bemidjiense (strain ATCC BAA-1014 / DSM 16622 / JCM 12645 / Bem) (Geobacter bemidjiensis).